We begin with the raw amino-acid sequence, 142 residues long: D-aminoacyl-tRNA deacylase (142 aa).

The Gly-cisPro motif, important for rejection of L-amino acids signature appears at 133–134 (GP).

This sequence belongs to the DTD family. Homodimer.

It is found in the cytoplasm. It carries out the reaction glycyl-tRNA(Ala) + H2O = tRNA(Ala) + glycine + H(+). It catalyses the reaction a D-aminoacyl-tRNA + H2O = a tRNA + a D-alpha-amino acid + H(+). An aminoacyl-tRNA editing enzyme that deacylates mischarged D-aminoacyl-tRNAs. Also deacylates mischarged glycyl-tRNA(Ala), protecting cells against glycine mischarging by AlaRS. Acts via tRNA-based rather than protein-based catalysis; rejects L-amino acids rather than detecting D-amino acids in the active site. By recycling D-aminoacyl-tRNA to D-amino acids and free tRNA molecules, this enzyme counteracts the toxicity associated with the formation of D-aminoacyl-tRNA entities in vivo and helps enforce protein L-homochirality. This chain is D-aminoacyl-tRNA deacylase, found in Acidothermus cellulolyticus (strain ATCC 43068 / DSM 8971 / 11B).